We begin with the raw amino-acid sequence, 767 residues long: MVGQRAQHSPVSLLLLIHLCLLHLRASGQPHPTPEAPVEEVVSVQGVRGGSVELACGSGPAPLLVLWSFTPLGSLVPRPVAVTDGAMSKVEAIASALGVVSLRNSSLVLGELHEGARGHFLCQVLHVAGGQLHAAYSHLTLAVLVPVSKPQVRLSNPSPVEGASVVATCAVREGTEPVTFAWQHRAPRGLGEALVGVTEPLFQLDPVNRTHLGWYMCSASNSVNRLSSDGAFLDVIYGPDKPVITMEPLGLTEEGFWASEREEVTLSCLAASNPPSHYVWLRDHTQVHTGPTYVIARAGRVHTGLYTCLARNSYLDTRTQTTVQLTIYYPPEGQPSCAVHPSPEAVTLLCAWPGGLPPAQLQWEGPQGPGPTAPSNVTWSHAAAQLPSGSVFTCTGQHPALAPPALCTVMLWEPLGRPTCWSTATMGDQFIMLSCEWPGGEPPATLGWLDEQQQPLGGSSSSMAVHLLQAQEDLAGREFTCRGTHLLRTPDPHCHLQLEAPQLDVAEPRVSVLEGGEAWLECSLRGGTPPAQLLWLGPQQQKVDPGTSGFMLHPEGAQLRLGIYDADPAHHRGTYQCVARNAVGNSSQSVLLEVLRYPAPPNVTISRLTYGRHRREVQLQWAILGPGNLTGFLVQRKASALGPGAGAWETAASDIEPESRGRRLGGLDPGVLYAFRILALNHHTAGHPSEVKIPADPPFSAYPAVLGAAGTGMVVATVASLLVFQYAARHPETFPRLETPTTTPGLDPAQETTDSPVNVTITVTATP.

The first 28 residues, 1–28, serve as a signal peptide directing secretion; the sequence is MVGQRAQHSPVSLLLLIHLCLLHLRASG. 3 Ig-like domains span residues 34–140, 150–234, and 242–324; these read PEAP…SHLT, PQVR…AFLD, and PVIT…TTVQ. Cystine bridges form between Cys56/Cys122, Cys169/Cys217, and Cys268/Cys308. Asn376 carries N-linked (GlcNAc...) asparagine glycosylation. 2 consecutive Ig-like domains span residues 399–499 and 501–593; these read PALA…LQLE and PQLD…VLLE. 2 cysteine pairs are disulfide-bonded: Cys435–Cys481 and Cys522–Cys577. Residues 599–699 form the Fibronectin type-III domain; that stretch reads APPNVTISRL…EVKIPADPPF (101 aa). Residues Asn602 and Asn628 are each glycosylated (N-linked (GlcNAc...) asparagine). The helical transmembrane segment at 704 to 724 threads the bilayer; it reads AVLGAAGTGMVVATVASLLVF. A disordered region spans residues 735–754; that stretch reads PRLETPTTTPGLDPAQETTD. Polar residues predominate over residues 739–754; the sequence is TPTTTPGLDPAQETTD.

It is found in the membrane. The sequence is that of V-set and immunoglobulin domain-containing protein 10-like 2 from Homo sapiens (Human).